Reading from the N-terminus, the 305-residue chain is Mas-related G-protein coupled receptor member A7 (305 aa).

The Extracellular portion of the chain corresponds to 1–17 (MDETSPRSIDIESLIPN). A helical transmembrane segment spans residues 18–38 (LMIIIFGLVGLTGNAIVLWLL). The Cytoplasmic segment spans residues 39 to 46 (GFCLHRNA). Residues 47-67 (FLVYILNLALADFLFLLCHFI) traverse the membrane as a helical segment. The Extracellular portion of the chain corresponds to 68–81 (NSAMFLLKVPIPNG). The chain crosses the membrane as a helical span at residues 82 to 102 (IFVYCFYTIKMVLYITGLSML). Topologically, residues 103 to 129 (SAISTERCLSVLCPIWYHCRRPEHTST) are cytoplasmic. A helical membrane pass occupies residues 130–150 (VMCAVIWIFSVLICILKEYFC). Residues 151–167 (DFFGTKLGNYYVCQASN) lie on the Extracellular side of the membrane. A helical membrane pass occupies residues 168–188 (FFMGAYLMFLFVVLCLSTLAL). At 189–211 (LARLFCGAEKMKFTRLFVTIMLT) the chain is on the cytoplasmic side. Residues 212 to 232 (ILVFLLCGLPWGFFWFLLIWI) form a helical membrane-spanning segment. At 233 to 244 (KGGFSVLDYRLY) the chain is on the extracellular side. A helical membrane pass occupies residues 245 to 265 (LASIVLTVVNSCANPIIYFFV). Residues 266-305 (GSFRHRLKHQTLKMVLQSALQDTPETHENMVEMSRIKAEQ) are Cytoplasmic-facing.

This sequence belongs to the G-protein coupled receptor 1 family. Mas subfamily. In terms of tissue distribution, expressed in a subset of sensory neurons that includes nociceptors. Expressed in the subclass of non-peptidergic sensory neurons that are IB4(+) and VR1(-).

The protein localises to the cell membrane. Functionally, orphan receptor. May be a receptor for RFamide-family neuropeptides such as NPFF and NPAF, which are analgesic in vivo. May regulate nociceptor function and/or development, including the sensation or modulation of pain. The polypeptide is Mas-related G-protein coupled receptor member A7 (Mrgpra7) (Mus musculus (Mouse)).